The chain runs to 194 residues: Dof zinc finger protein DOF1.7 (194 aa).

The segment at 33 to 87 (LKCPRCDSPNTKFCYYNNYNLSQPRHFCKNCRRYWTKGGALRNIPVGGGTRKSNK) adopts a Dof-type zinc-finger fold. Residues Cys35, Cys38, Cys60, and Cys63 each coordinate Zn(2+). The interval 74–125 (RNIPVGGGTRKSNKRSGSSPSSNLKNQTVAEKPDHHGSGSEEKEERVSGQEM) is disordered. Over residues 88–99 (RSGSSPSSNLKN) the composition is skewed to low complexity. The span at 104–121 (EKPDHHGSGSEEKEERVS) shows a compositional bias: basic and acidic residues.

It is found in the nucleus. Transcription factor that binds specifically to a 5'-AA[AG]G-3' consensus core sequence. The polypeptide is Dof zinc finger protein DOF1.7 (DOF1.7) (Arabidopsis thaliana (Mouse-ear cress)).